A 286-amino-acid chain; its full sequence is Pantothenate synthetase (286 aa).

Residue 31-38 (MGALHDGH) participates in ATP binding. His38 serves as the catalytic Proton donor. Gln62 contributes to the (R)-pantoate binding site. Gln62 lines the beta-alanine pocket. 148–151 (GKKD) is an ATP binding site. Residue Gln154 coordinates (R)-pantoate. ATP-binding positions include Val177 and 185–188 (KSSR).

It belongs to the pantothenate synthetase family. In terms of assembly, homodimer.

It localises to the cytoplasm. The catalysed reaction is (R)-pantoate + beta-alanine + ATP = (R)-pantothenate + AMP + diphosphate + H(+). Its pathway is cofactor biosynthesis; (R)-pantothenate biosynthesis; (R)-pantothenate from (R)-pantoate and beta-alanine: step 1/1. In terms of biological role, catalyzes the condensation of pantoate with beta-alanine in an ATP-dependent reaction via a pantoyl-adenylate intermediate. This is Pantothenate synthetase from Staphylococcus epidermidis (strain ATCC 35984 / DSM 28319 / BCRC 17069 / CCUG 31568 / BM 3577 / RP62A).